Reading from the N-terminus, the 331-residue chain is Probable inactive O-methyltransferase 11 (331 aa).

Residues G179, D202, 224 to 226 (GDF), D225, F226, and K239 contribute to the S-adenosyl-L-methionine site.

Belongs to the class I-like SAM-binding methyltransferase superfamily. Cation-independent O-methyltransferase family. COMT subfamily.

This is Probable inactive O-methyltransferase 11 (omt11) from Dictyostelium discoideum (Social amoeba).